The primary structure comprises 116 residues: Small ribosomal subunit protein uS13m (116 aa).

It belongs to the universal ribosomal protein uS13 family. As to quaternary structure, part of the small ribosomal subunit.

The protein localises to the mitochondrion. In terms of biological role, located at the top of the head of the small subunit, it contacts several helices of the 18S rRNA. This is Small ribosomal subunit protein uS13m (RPS13) from Daucus carota (Wild carrot).